We begin with the raw amino-acid sequence, 318 residues long: Putative 2-hydroxyacid dehydrogenase SSP0606 (318 aa).

Residues 156–157 (EI), 235–237 (ASR), and aspartate 261 contribute to the NAD(+) site. Arginine 237 is a catalytic residue. The active site involves glutamate 266. The Proton donor role is filled by histidine 284. Residue 284–287 (HIGN) participates in NAD(+) binding.

It belongs to the D-isomer specific 2-hydroxyacid dehydrogenase family.

This Staphylococcus saprophyticus subsp. saprophyticus (strain ATCC 15305 / DSM 20229 / NCIMB 8711 / NCTC 7292 / S-41) protein is Putative 2-hydroxyacid dehydrogenase SSP0606.